The sequence spans 2837 residues: Probable polyketide synthase 3 (2837 aa).

A Ketosynthase family 3 (KS3) domain is found at 39-464 (NNGIGIIGIG…GSNVCIILKD (426 aa)). Residues C209, H348, and H388 each act as for beta-ketoacyl synthase activity in the active site. The acyl/malonyl transferase stretch occupies residues 664 to 697 (GIKPTFIVGHSLGEVTAAYCSGMIDLETECYLIY). The For acyl/malonyl transferase activity role is filled by S674. The interval 962 to 1084 (IDILGNSITD…GNFQLFKHNG (123 aa)) is N-terminal hotdog fold. Positions 962 to 1255 (IDILGNSITD…CTSLTPIQDS (294 aa)) constitute a PKS/mFAS DH domain. The Proton acceptor; for dehydratase activity role is filled by H995. The C-terminal hotdog fold stretch occupies residues 1106-1255 (NLTKLTKEDL…CTSLTPIQDS (150 aa)). The Proton donor; for dehydratase activity role is filled by D1169. A Carrier domain is found at 2330 to 2407 (DNKNSVNQMF…SSIKIITNSL (78 aa)). S2367 carries the post-translational modification O-(pantetheine 4'-phosphoryl)serine. Residues 2464-2484 (KVILLSGSTGFLGGYLLLNLV) form a helical membrane-spanning segment.

Pantetheine 4'-phosphate is required as a cofactor.

The protein resides in the membrane. Its function is as follows. Probable polyketide synthase. The polypeptide is Probable polyketide synthase 3 (pks3) (Dictyostelium discoideum (Social amoeba)).